Here is a 415-residue protein sequence, read N- to C-terminus: Ornithine cyclodeaminase (415 aa).

Residues Asn241, Ala242, Asp320, Thr352, Leu354, His355, Asp373, Asp396, and Val397 each contribute to the NAD(+) site.

It belongs to the AgrE/ArgZ ornithine cyclodeaminase family. It depends on NAD(+) as a cofactor.

The enzyme catalyses L-ornithine = L-proline + NH4(+). Functionally, catalyzes the conversion of ornithine to proline, with the release of ammonia. This chain is Ornithine cyclodeaminase, found in Methanococcus maripaludis (strain DSM 14266 / JCM 13030 / NBRC 101832 / S2 / LL).